Here is a 102-residue protein sequence, read N- to C-terminus: Large ribosomal subunit protein bL21 (102 aa).

It belongs to the bacterial ribosomal protein bL21 family. Part of the 50S ribosomal subunit. Contacts protein L20.

In terms of biological role, this protein binds to 23S rRNA in the presence of protein L20. The polypeptide is Large ribosomal subunit protein bL21 (Phytoplasma mali (strain AT)).